Consider the following 352-residue polypeptide: Galactokinase (352 aa).

17–20 (EHTD) is a binding site for substrate. ATP-binding positions include Ser-49 and 101-107 (GAGLSSS). Residues Ser-107 and Glu-139 each contribute to the Mg(2+) site. Asp-151 acts as the Proton acceptor in catalysis. Tyr-200 contributes to the substrate binding site.

Belongs to the GHMP kinase family. GalK subfamily. Monomer.

The protein localises to the cytoplasm. The catalysed reaction is alpha-D-galactose + ATP = alpha-D-galactose 1-phosphate + ADP + H(+). The protein operates within carbohydrate metabolism; galactose metabolism. Functionally, catalyzes the transfer of the gamma-phosphate of ATP to D-galactose to form alpha-D-galactose-1-phosphate (Gal-1-P). Is very specific for its substrate, since it is not able to use D-glucose, D-fructose, D-mannose, 2-deoxy-D-glucose, and D-glucosamine as substrates. This Pyrococcus furiosus (strain ATCC 43587 / DSM 3638 / JCM 8422 / Vc1) protein is Galactokinase.